The primary structure comprises 232 residues: Sugar fermentation stimulation protein homolog (232 aa).

This sequence belongs to the SfsA family.

This is Sugar fermentation stimulation protein homolog from Acidithiobacillus ferrooxidans (strain ATCC 23270 / DSM 14882 / CIP 104768 / NCIMB 8455) (Ferrobacillus ferrooxidans (strain ATCC 23270)).